The chain runs to 872 residues: FHIP family protein CBG19667 (872 aa).

Residues 800 to 841 (SRSSPRSADEHDSTLFYGRSTIPPPGRKPLLREPSHQETLDD) are disordered. Residues 829-841 (LLREPSHQETLDD) are compositionally biased toward basic and acidic residues.

Belongs to the FHIP family.

The polypeptide is FHIP family protein CBG19667 (Caenorhabditis briggsae).